A 76-amino-acid polypeptide reads, in one-letter code: Kappa-actitoxin-Avd4o (76 aa).

The signal sequence occupies residues Met-1 to Ala-19. Positions Ala-20–Leu-33 are excised as a propeptide. 3 cysteine pairs are disulfide-bonded: Cys-37–Cys-72, Cys-39–Cys-65, and Cys-55–Cys-73.

This sequence belongs to the sea anemone type 3 (BDS) potassium channel toxin family. Experimental results show no expression in the ectodermal tissue from the distal and proximal tentacles, body wall, and oral disk. Since paralogs are expressed in this tissue, an expression of this toxin in this tissue is probable. The negative results could be explained by the very low abundance of EST sequences.

The protein localises to the secreted. Its subcellular location is the nematocyst. Its function is as follows. Blocks Kv3 voltage-gated potassium channels. Reduces blood pressure. The chain is Kappa-actitoxin-Avd4o from Anemonia viridis (Snakelocks anemone).